Reading from the N-terminus, the 422-residue chain is Glucuronoxylanase XynC (422 aa).

The N-terminal stretch at 1–32 is a signal peptide; sequence MIPRIKKTICVLLVCFTMLSVMLGPGATEVLA. Glu-171 (proton donor) is an active-site residue. Glu-260 functions as the Nucleophile in the catalytic mechanism.

This sequence belongs to the glycosyl hydrolase 30 family.

It localises to the secreted. The catalysed reaction is Endohydrolysis of (1-&gt;4)-beta-D-xylosyl links in some glucuronoarabinoxylans.. It participates in glycan degradation; xylan degradation. In terms of biological role, catalyzes the depolymerization of methylglucuronoxylan (MeGAXn) from different sources. It cleaves the beta-1,4-xylosidic bond penultimate to that linking carbon one of the xylose residue substituted with alpha-1,2-linked 4-O-methyl-D-glucuronate (MeGA). This chain is Glucuronoxylanase XynC (xynC), found in Bacillus subtilis (strain 168).